We begin with the raw amino-acid sequence, 102 residues long: Circadian clock oscillator protein KaiB (102 aa).

The protein belongs to the KaiB family. Undergoes a major conformational rearrangment; in the free state forms homotetramers with 2 dimers. When bound to the CI domain of KaiC switches to a monomeric thioredoxin-fold (KaiB(fs)). Monomers, homodimers and homotetramers are detected in solution; at low concentrations only monomers are seen. In vitro forms KaiC(6):KaiB(1) and KaiC(6):KaiB(6) complexes. Only associates with 'Ser-431'-phosphorylated KaiC (and not with doubly phosphorylated KaiC). Complex formation between KaiB and KaiC is regulated by the phosphorylation state of KaiC and by an ATP hydrolysis-driven conformation change in the CI ring of KaiC; complex formation is slow. Slow complex formation is crucial for the timing of the circadian period. In low resolution cryo-EM forms a KaiC(6):KaiB(6) complex. The KaiABC complex composition changes during the circadian cycle to control KaiC phosphorylation. Complexes KaiC(6), KaiA(2-4):KaiC(6), KaiB(6):KaiC(6) and KaiC(6):KaiB(6):KaiA(12) are among the most important forms, many form cooperatively. The KaiB:KaiC complex is more prevalent at 16 hours (in the dark) than at 4 hours (in the light) in the circadian cycle. The KaiA:KaiB complex is only found at 20-24 hours in the circadian cycle (subjective night). Binds to the CI domain of KaiC; SasA and KaiB compete to bind to the CI domain.

The protein resides in the cytoplasm. It is found in the cell membrane. Functionally, key component of the KaiABC oscillator complex, which constitutes the main circadian regulator in cyanobacteria. Complex composition changes during the circadian cycle to control KaiC phosphorylation. KaiA stimulates KaiC autophosphorylation, while KaiB sequesters KaiA, leading to KaiC autodephosphorylation. KaiA binding to the KaiC CII domain yields KaiA(2-4):KaiC(6) complexes which stimulate KaiC autophosphorylation. Phospho-Ser-431 KaiC accumulation triggers binding of KaiB to form the KaiB(6):KaiC(6) complex, leading to changes in the output regulators CikA and SasA. KaiB switches to a thioredoxin-like fold (KaiB(fs)) in complex with KaiC. KaiB(6):KaiC(6) formation exposes a site for KaiA binding that sequesters KaiA from the CII domain, making the KaiC(6):KaiB(6):KaiA(12) complex that results in KaiC autodephosphorylation. Complete dephosphorylation of KaiC leads to dissociation of KaiA(2):KaiB(1), completing 1 cycle of the Kai oscillator. In terms of biological role, circadian oscillations can be generated in vitro by incubating KaiA, KaiB and KaiC with 1 mM ATP. The cycle is self-sustainable for at least 3 cycles and resistant to temperature changes. A very robust clock is reconstituted with KaiA, KaiB, KaiC, SasA, CikA and RpaA; output is measured by transcription from an appropriate reporter. Its function is as follows. A metamorphic protein which reversibly switches between an inactive tetrameric fold and a rare, thioredoxin-like monomeric fold (KaiB(fs)). KaiB(fs) binds phospho-KaiC, KaiA and CikA. KaiA and CikA compete for binding to KaiB(fs), and KaiB(fs) and SasA compete for binding to KaiC, thus the clock oscillator and output signal pathway are tightly coupled. In Synechococcus elongatus (strain ATCC 33912 / PCC 7942 / FACHB-805) (Anacystis nidulans R2), this protein is Circadian clock oscillator protein KaiB.